Reading from the N-terminus, the 115-residue chain is MAVLALLFCLVTFPSCILSQVQLKESGPGLVAPSQSLSITCTVSGFSLTGYGVNWVRQPPGKGLEWLGMIWGDGSTDYNSALKSRLSISKDNSKSQVFLKMNSLQTDDTARYYCA.

The N-terminal stretch at 1–19 (MAVLALLFCLVTFPSCILS) is a signal peptide. The Ig-like domain maps to 20-115 (QVQLKESGPG…TDDTARYYCA (96 aa)).

This chain is Ig heavy chain V region PJ14, found in Mus musculus (Mouse).